We begin with the raw amino-acid sequence, 166 residues long: uncharacterized protein (166 aa).

Residues 25-116 are disordered; the sequence is PEEPPLWVPP…QGADEVHSQH (92 aa). Ser105 bears the Phosphoserine mark.

This is an uncharacterized protein from Rattus norvegicus (Rat).